Here is a 433-residue protein sequence, read N- to C-terminus: 23S rRNA (uracil(1939)-C(5))-methyltransferase RlmD (433 aa).

The region spanning Arg10 to Arg68 is the TRAM domain. Interaction with RNA regions lie at residues Asp23–Phe40 and Lys58–Arg63. [4Fe-4S] cluster is bound by residues Cys81, Cys87, Cys90, and Cys162. The S-adenosyl-L-methionine site is built by Gln265, Phe294, Asn299, Glu315, Asn342, and Asp363. Cys389 acts as the Nucleophile in catalysis.

The protein belongs to the class I-like SAM-binding methyltransferase superfamily. RNA M5U methyltransferase family. RlmD subfamily.

The enzyme catalyses uridine(1939) in 23S rRNA + S-adenosyl-L-methionine = 5-methyluridine(1939) in 23S rRNA + S-adenosyl-L-homocysteine + H(+). Functionally, catalyzes the formation of 5-methyl-uridine at position 1939 (m5U1939) in 23S rRNA. This Escherichia coli (strain K12) protein is 23S rRNA (uracil(1939)-C(5))-methyltransferase RlmD.